A 266-amino-acid polypeptide reads, in one-letter code: MKLSLSPPPYADAPVVVLISGLGGSGSYWLPQLAVLEQEYQVVCYDQRGTGNNPDTLAEDYSIAQMAAELHQALVAAGIEHYAVVGHALGALVGMQLALDYPASVTVLISVNGWLRINAHTRRCFQVRERLLYSGGAQAWVEAQPLFLYPADWMAARAPRLEAEDALALAHFQGKNNLLRRLNALKRADFSHHADRIRCPVQIICASDDLLVPSACSSELHAALPDSQKMVMRYGGHACNVTDPETFNALLLNGLASLLHHREAAL.

An AB hydrolase-1 domain is found at 14–115 (PVVVLISGLG…TVLISVNGWL (102 aa)).

The protein belongs to the AB hydrolase superfamily. Hydrolase RutD family.

It catalyses the reaction carbamate + 2 H(+) = NH4(+) + CO2. In terms of biological role, involved in pyrimidine catabolism. May facilitate the hydrolysis of carbamate, a reaction that can also occur spontaneously. This Shigella sonnei (strain Ss046) protein is Putative carbamate hydrolase RutD.